We begin with the raw amino-acid sequence, 459 residues long: Protein BTN1 (459 aa).

11 helical membrane passes run 37–57, 73–93, 102–122, 129–149, 167–187, 189–209, 240–260, 283–303, 325–342, 352–372, and 374–394; these read VSVV…YVLV, AVLL…PYFI, IAVF…APVE, LLGV…FLGL, GAGL…GLGV, GSLL…WGIL, VPAG…AATA, ALFF…YTIN, YYPF…ISRS, LYLP…HAVL, and FIPS…LGGA.

This sequence belongs to the battenin family.

It localises to the vacuole membrane. Involved in vacuolar transport and vacuole pH homeostasis. Also required for cytokinesis. The chain is Protein BTN1 (BTN1) from Chaetomium globosum (strain ATCC 6205 / CBS 148.51 / DSM 1962 / NBRC 6347 / NRRL 1970) (Soil fungus).